A 177-amino-acid polypeptide reads, in one-letter code: NAD(P)H-quinone oxidoreductase subunit 6, chloroplastic (177 aa).

Helical transmembrane passes span 10–30 (IFLVFLGSGLILGGLGVVLLT), 32–52 (PVYSAFSLGLVLVCISLFHIP), 61–81 (AQLLIYVGAINVLIVFAVMFM), 92–112 (LWTVGDGVTSLICTSILFSLI), and 152–172 (FYLPFELISIILLVALVGAIA).

Belongs to the complex I subunit 6 family. As to quaternary structure, NDH is composed of at least 16 different subunits, 5 of which are encoded in the nucleus.

It is found in the plastid. Its subcellular location is the chloroplast thylakoid membrane. It catalyses the reaction a plastoquinone + NADH + (n+1) H(+)(in) = a plastoquinol + NAD(+) + n H(+)(out). It carries out the reaction a plastoquinone + NADPH + (n+1) H(+)(in) = a plastoquinol + NADP(+) + n H(+)(out). In terms of biological role, NDH shuttles electrons from NAD(P)H:plastoquinone, via FMN and iron-sulfur (Fe-S) centers, to quinones in the photosynthetic chain and possibly in a chloroplast respiratory chain. The immediate electron acceptor for the enzyme in this species is believed to be plastoquinone. Couples the redox reaction to proton translocation, and thus conserves the redox energy in a proton gradient. The sequence is that of NAD(P)H-quinone oxidoreductase subunit 6, chloroplastic (ndhG) from Illicium oligandrum (Star anise).